The primary structure comprises 188 residues: Putative protein SSX9 (188 aa).

The region spanning 20-83 (KIQKAFDDIA…TGATDLQGND (64 aa)) is the KRAB-related domain. A disordered region spans residues 114-165 (KKPAEVGNDSKEVPEASGLQNDGKQLCPPGKPTTSEKINKASGPKRGKHAWT). The span at 115–127 (KPAEVGNDSKEVP) shows a compositional bias: basic and acidic residues. Position 123 is a phosphoserine (S123). Residues 156-165 (GPKRGKHAWT) show a composition bias toward basic residues.

It belongs to the SSX family. Not detected in any normal or tumor tissues.

Could act as a modulator of transcription. This Homo sapiens (Human) protein is Putative protein SSX9.